The chain runs to 155 residues: UPF0260 protein NGR_c07710 (155 aa).

Belongs to the UPF0260 family.

The protein is UPF0260 protein NGR_c07710 of Sinorhizobium fredii (strain NBRC 101917 / NGR234).